We begin with the raw amino-acid sequence, 95 residues long: Large ribosomal subunit protein bL25 (95 aa).

Belongs to the bacterial ribosomal protein bL25 family. In terms of assembly, part of the 50S ribosomal subunit; part of the 5S rRNA/L5/L18/L25 subcomplex. Contacts the 5S rRNA. Binds to the 5S rRNA independently of L5 and L18.

This is one of the proteins that binds to the 5S RNA in the ribosome where it forms part of the central protuberance. The sequence is that of Large ribosomal subunit protein bL25 from Glaesserella parasuis serovar 5 (strain SH0165) (Haemophilus parasuis).